Here is a 722-residue protein sequence, read N- to C-terminus: D-galactosyl-beta-1-&gt;4-L-rhamnose phosphorylase (722 aa).

Aspartate 319 serves as the catalytic Proton donor.

It belongs to the glycoside hydrolase 112 family.

The enzyme catalyses beta-D-galactosyl-(1-&gt;4)-L-rhamnose + phosphate = alpha-D-galactose 1-phosphate + L-rhamnopyranose. Functionally, reversibly phosphorolyzes beta-D-galactosyl-(1-&gt;4)-L-rhamnose to form alpha-D-galactose 1-phosphate and L-rhamnose. Does not phosphorolyze galacto-N-biose or lacto-N-biose. In the reverse reaction, has the highest activity toward L-rhamnose, also has activity toward L-mannose, and low activity toward L-lyxose, D-glucose, 2-deoxy-D-glucose and D-galactose. In Lachnoclostridium phytofermentans (strain ATCC 700394 / DSM 18823 / ISDg) (Clostridium phytofermentans), this protein is D-galactosyl-beta-1-&gt;4-L-rhamnose phosphorylase.